The sequence spans 612 residues: Indole-3-acetic acid-amido synthetase GH3.6 (612 aa).

This sequence belongs to the IAA-amido conjugating enzyme family. As to expression, expressed in cotyledons, stipules, true leaves, hypocotyls, and all parts of the roots. Not detected in flowers.

Functionally, catalyzes the synthesis of indole-3-acetic acid (IAA)-amino acid conjugates, providing a mechanism for the plant to cope with the presence of excess auxin. Strongly reactive with Glu, Gln, Trp, Asp, Ala, Leu, Phe, Gly, Tyr, Met, Ile and Val. Little or no product formation with His, Ser, Thr, Arg, Lys, or Cys. Also active on pyruvic and butyric acid analogs of IAA, PAA and the synthetic auxin naphthaleneacetic acid (NAA). The two chlorinated synthetic auxin herbicides 2,4-D and 3,6-dichloro-o-anisic acid (dicamba) cannot be used as substrates. Involved in auxin signal transduction. Inhibits shoot and hypocotyl cell elongation, and lateral root cell differentiation in light. This Arabidopsis thaliana (Mouse-ear cress) protein is Indole-3-acetic acid-amido synthetase GH3.6 (GH3.6).